We begin with the raw amino-acid sequence, 460 residues long: V-type ATP synthase beta chain (460 aa).

It belongs to the ATPase alpha/beta chains family.

In terms of biological role, produces ATP from ADP in the presence of a proton gradient across the membrane. The V-type beta chain is a regulatory subunit. The polypeptide is V-type ATP synthase beta chain (Acetivibrio thermocellus (strain ATCC 27405 / DSM 1237 / JCM 9322 / NBRC 103400 / NCIMB 10682 / NRRL B-4536 / VPI 7372) (Clostridium thermocellum)).